We begin with the raw amino-acid sequence, 209 residues long: Probable nicotinate-nucleotide adenylyltransferase (209 aa).

It belongs to the NadD family.

It catalyses the reaction nicotinate beta-D-ribonucleotide + ATP + H(+) = deamido-NAD(+) + diphosphate. The protein operates within cofactor biosynthesis; NAD(+) biosynthesis; deamido-NAD(+) from nicotinate D-ribonucleotide: step 1/1. Its function is as follows. Catalyzes the reversible adenylation of nicotinate mononucleotide (NaMN) to nicotinic acid adenine dinucleotide (NaAD). The polypeptide is Probable nicotinate-nucleotide adenylyltransferase (Shewanella woodyi (strain ATCC 51908 / MS32)).